The primary structure comprises 386 residues: tRNA N6-adenosine threonylcarbamoyltransferase (386 aa).

Residues H112 and H116 each contribute to the Fe cation site. Substrate contacts are provided by residues L134–G138, D167, G180, and N322. D350 serves as a coordination point for Fe cation.

This sequence belongs to the KAE1 / TsaD family. Requires Fe(2+) as cofactor.

The protein localises to the cytoplasm. It carries out the reaction L-threonylcarbamoyladenylate + adenosine(37) in tRNA = N(6)-L-threonylcarbamoyladenosine(37) in tRNA + AMP + H(+). Required for the formation of a threonylcarbamoyl group on adenosine at position 37 (t(6)A37) in tRNAs that read codons beginning with adenine. Is involved in the transfer of the threonylcarbamoyl moiety of threonylcarbamoyl-AMP (TC-AMP) to the N6 group of A37, together with TsaE and TsaB. TsaD likely plays a direct catalytic role in this reaction. This chain is tRNA N6-adenosine threonylcarbamoyltransferase, found in Rickettsia akari (strain Hartford).